The sequence spans 206 residues: Small ribosomal subunit protein uS4 (206 aa).

The region spanning 96–156 is the S4 RNA-binding domain; sequence TRLDNVVYRM…EKSRTQARIK (61 aa).

It belongs to the universal ribosomal protein uS4 family. In terms of assembly, part of the 30S ribosomal subunit. Contacts protein S5. The interaction surface between S4 and S5 is involved in control of translational fidelity.

In terms of biological role, one of the primary rRNA binding proteins, it binds directly to 16S rRNA where it nucleates assembly of the body of the 30S subunit. Functionally, with S5 and S12 plays an important role in translational accuracy. This Shewanella halifaxensis (strain HAW-EB4) protein is Small ribosomal subunit protein uS4.